Reading from the N-terminus, the 531-residue chain is Cytochrome P450 monooxygenase ffsD (531 aa).

A helical transmembrane segment spans residues 40 to 60 (VGALLGISLSVVLLLWVISVV). Cys-475 provides a ligand contact to heme.

It belongs to the cytochrome P450 family. The cofactor is heme.

The protein localises to the membrane. The protein operates within mycotoxin biosynthesis. Cytochrome P450 monooxygenase; part of the gene cluster that mediates the biosynthesis of the cytotoxic leucine-containing cytochalasans, including aspochalasin C, aspochalasin E, TMC-169, flavichalasine F, aspergillin PZ, aspochalasin M and flavichalasine G. The first step in the pathway is catalyzed by the hybrid PKS-NRPS ffsA that utilizes 8 units of malonyl-CoA to iteratively assemble the octaketide chain before addition of L-leucine by the C-terminal NRPS modules. Because ffsA lacks a designated enoylreductase (ER) domain, the required activity is provided the enoyl reductase fssC. The methyltransferase (MT) domain of ffsA catalyzes the alpha-methylation at C10 and C14 using S-adenosyl-L-methionine as the methyl-donating cosubstrate. Reduction by the hydrolyase ffsE, followed by dehydration and intra-molecular Diels-Alder cyclization by the Diels-Alderase ffsF then yield the required isoindolone-fused macrocycle. A number of oxidative steps catalyzed by the tailoring cytochrome P450 monooxygenase ffsD, the FAD-linked oxidoreductase ffsJ and the short-chain dehydrogenase/reductase ffsI, are further required to afford the final products. This Aspergillus flavipes protein is Cytochrome P450 monooxygenase ffsD.